The sequence spans 166 residues: NADH-quinone oxidoreductase subunit B 1 (166 aa).

Residues C39, C40, C106, and C135 each coordinate [4Fe-4S] cluster.

Belongs to the complex I 20 kDa subunit family. NDH-1 is composed of 14 different subunits. Subunits NuoB, C, D, E, F, and G constitute the peripheral sector of the complex. Requires [4Fe-4S] cluster as cofactor.

It is found in the cell membrane. It catalyses the reaction a quinone + NADH + 5 H(+)(in) = a quinol + NAD(+) + 4 H(+)(out). Functionally, NDH-1 shuttles electrons from NADH, via FMN and iron-sulfur (Fe-S) centers, to quinones in the respiratory chain. The immediate electron acceptor for the enzyme in this species is believed to be a menaquinone. Couples the redox reaction to proton translocation (for every two electrons transferred, four hydrogen ions are translocated across the cytoplasmic membrane), and thus conserves the redox energy in a proton gradient. This is NADH-quinone oxidoreductase subunit B 1 from Symbiobacterium thermophilum (strain DSM 24528 / JCM 14929 / IAM 14863 / T).